The following is a 239-amino-acid chain: Proteasome activator complex subunit 2 (239 aa).

The residue at position 2 (Ala2) is an N-acetylalanine. Ser10 carries the post-translational modification Phosphoserine. The interval 65-86 (DIPIPDPPPKDDEMETDKQEKK) is disordered. The span at 72-86 (PPKDDEMETDKQEKK) shows a compositional bias: basic and acidic residues.

The protein belongs to the PA28 family. As to quaternary structure, heterodimer of PSME1 and PSME2, which forms a hexameric ring.

In terms of biological role, implicated in immunoproteasome assembly and required for efficient antigen processing. The PA28 activator complex enhances the generation of class I binding peptides by altering the cleavage pattern of the proteasome. The polypeptide is Proteasome activator complex subunit 2 (PSME2) (Sus scrofa (Pig)).